Here is a 525-residue protein sequence, read N- to C-terminus: Protein BSP1 (525 aa).

4 disordered regions span residues 21 to 40, 98 to 262, 285 to 325, and 339 to 525; these read INKP…TPIE, QQQH…PSKM, LSSE…VPPK, and DKTG…PTKI. The segment covering 110-122 has biased composition (basic and acidic residues); it reads IEPVRHIIPDRHS. Residues 148-162 show a composition bias toward polar residues; sequence NRASSENVVKSTTSA. Composition is skewed to basic and acidic residues over residues 171–182, 201–223, and 230–242; these read YKDDITAKKLDV, DKNK…EDNK, and KDQD…KPTR. The segment covering 251–261 has biased composition (polar residues); that stretch reads QLKSPPQSPSK. Over residues 285 to 297 the composition is skewed to low complexity; it reads LSSEENSRSSLSE. Basic and acidic residues-rich tracts occupy residues 314–325 and 339–354; these read KAEKKKPVVPPK and DKTG…EPEF. Over residues 382–398 the composition is skewed to polar residues; the sequence is QNLSKNTENKKSVAQSK. Over residues 447-456 the composition is skewed to acidic residues; it reads EESEISDSEP. Residues 510–525 are compositionally biased toward basic residues; that stretch reads NKSRSRGPKRKLPTKI.

Its subcellular location is the cell membrane. It is found in the cytoplasm. The protein localises to the cytoskeleton. The protein resides in the actin patch. Cortical patch protein involved in endocytosis. The sequence is that of Protein BSP1 (BSP1) from Candida glabrata (strain ATCC 2001 / BCRC 20586 / JCM 3761 / NBRC 0622 / NRRL Y-65 / CBS 138) (Yeast).